The chain runs to 215 residues: Cytochrome b6 (215 aa).

A helical membrane pass occupies residues 32 to 52 (IFYCLGGITFTSFVIQVASGF). Cys35 contacts heme c. Residues His86 and His100 each coordinate heme b. The next 3 membrane-spanning stretches (helical) occupy residues 90-110 (ASMM…TGGF), 116-136 (LTWV…VTGY), and 186-206 (LHTF…FLMI). Positions 187 and 202 each coordinate heme b.

It belongs to the cytochrome b family. PetB subfamily. As to quaternary structure, the 4 large subunits of the cytochrome b6-f complex are cytochrome b6, subunit IV (17 kDa polypeptide, PetD), cytochrome f and the Rieske protein, while the 4 small subunits are PetG, PetL, PetM and PetN. The complex functions as a dimer. The cofactor is heme b. Requires heme c as cofactor.

Its subcellular location is the plastid. The protein resides in the chloroplast thylakoid membrane. Component of the cytochrome b6-f complex, which mediates electron transfer between photosystem II (PSII) and photosystem I (PSI), cyclic electron flow around PSI, and state transitions. This chain is Cytochrome b6, found in Chaetosphaeridium globosum (Charophycean green alga).